The sequence spans 693 residues: Translation factor GUF1 homolog, mitochondrial (693 aa).

Residues 51-63 (SSSSTEKPTTSGT) are compositionally biased toward polar residues. A disordered region spans residues 51–78 (SSSSTEKPTTSGTINGGGGKQKAASQPK). Positions 88–270 (QKIRNFSIIA…RIVQMVPPPP (183 aa)) constitute a tr-type G domain. Residues 97 to 104 (AHIDHGKS), 163 to 167 (DTPGH), and 217 to 220 (NKID) each bind GTP.

It belongs to the TRAFAC class translation factor GTPase superfamily. Classic translation factor GTPase family. LepA subfamily.

It is found in the mitochondrion inner membrane. It catalyses the reaction GTP + H2O = GDP + phosphate + H(+). Functionally, promotes mitochondrial protein synthesis. May act as a fidelity factor of the translation reaction, by catalyzing a one-codon backward translocation of tRNAs on improperly translocated ribosomes. Binds to mitochondrial ribosomes in a GTP-dependent manner. This is Translation factor GUF1 homolog, mitochondrial from Phaeodactylum tricornutum (strain CCAP 1055/1).